Consider the following 327-residue polypeptide: DNA-directed RNA polymerase subunit alpha (327 aa).

The interval 1–233 is alpha N-terminal domain (alpha-NTD); sequence MVREKVKVST…NLFIPFLHVE (233 aa). The alpha C-terminal domain (alpha-CTD) stretch occupies residues 266 to 327; it reads EQGFQYIFID…KKILDILEKK (62 aa).

The protein belongs to the RNA polymerase alpha chain family. As to quaternary structure, in plastids the minimal PEP RNA polymerase catalytic core is composed of four subunits: alpha, beta, beta', and beta''. When a (nuclear-encoded) sigma factor is associated with the core the holoenzyme is formed, which can initiate transcription.

The protein localises to the plastid. It localises to the chloroplast. It carries out the reaction RNA(n) + a ribonucleoside 5'-triphosphate = RNA(n+1) + diphosphate. DNA-dependent RNA polymerase catalyzes the transcription of DNA into RNA using the four ribonucleoside triphosphates as substrates. The sequence is that of DNA-directed RNA polymerase subunit alpha from Barbarea verna (Land cress).